The following is a 1551-amino-acid chain: Serine/threonine-protein kinase MRCK gamma (1551 aa).

One can recognise a Protein kinase domain in the interval 71–337 (FEILKVIGRG…LDDFRKHPFF (267 aa)). Residues 77 to 85 (IGRGAFGEV) and lysine 100 each bind ATP. Aspartate 195 serves as the catalytic Proton acceptor. Serine 216 and serine 228 each carry phosphoserine; by autocatalysis. Threonine 234 carries the post-translational modification Phosphothreonine; by autocatalysis. Residues 338 to 408 (EGVDWERLAT…TSGSPFDVQS (71 aa)) enclose the AGC-kinase C-terminal domain. 2 coiled-coil regions span residues 442–675 (QPQE…TESN) and 729–801 (KARR…QARG). The tract at residues 578–605 (QESSQAKTVHAAPETNGIGSPEGQSQEA) is disordered. The tract at residues 820–886 (TEKDSAKDPG…SHTLRPRSFP (67 aa)) is disordered. Over residues 839 to 849 (AEAELRPEGRR) the composition is skewed to basic and acidic residues. Residues 877–926 (SHTLRPRSFPSPTKCLRCTSLMLGLGRQGLGCDTCGYFCHSACASQAPPC) form a Phorbol-ester/DAG-type zinc finger. Residues 946 to 1065 (GTAYEGFLSV…WLQVLGELQR (120 aa)) form the PH domain. The CNH domain occupies 1091-1365 (LPHALCAAVI…RPLNPEGSLF (275 aa)). Residues 1436–1449 (ISPPTNFNHLVHVG) enclose the CRIB domain. The disordered stretch occupies residues 1441-1551 (NFNHLVHVGP…PPDPESESSP (111 aa)). Residues 1455–1468 (PNTRDGTRAQEQKS) show a composition bias toward basic and acidic residues. Serine 1481 carries the post-translational modification Phosphoserine. Residues 1511 to 1527 (TSLSSESVSCPQGSLSP) show a composition bias toward polar residues.

Belongs to the protein kinase superfamily. AGC Ser/Thr protein kinase family. DMPK subfamily. As to quaternary structure, homodimer and homotetramer via the coiled coil regions. Interacts tightly with GTP-bound but not GDP-bound CDC42. Mg(2+) serves as cofactor.

The protein resides in the cytoplasm. The enzyme catalyses L-seryl-[protein] + ATP = O-phospho-L-seryl-[protein] + ADP + H(+). The catalysed reaction is L-threonyl-[protein] + ATP = O-phospho-L-threonyl-[protein] + ADP + H(+). With respect to regulation, maintained in an inactive, closed conformation by an interaction between the kinase domain and the negative autoregulatory C-terminal coiled-coil region. Agonist binding to the phorbol ester binding site disrupts this, releasing the kinase domain to allow N-terminus-mediated dimerization and kinase activation by transautophosphorylation. Functionally, may act as a downstream effector of CDC42 in cytoskeletal reorganization. Contributes to the actomyosin contractility required for cell invasion, through the regulation of MYPT1 and thus MLC2 phosphorylation. In Mus musculus (Mouse), this protein is Serine/threonine-protein kinase MRCK gamma.